Here is a 383-residue protein sequence, read N- to C-terminus: Putative glutamate--cysteine ligase 2-2 (383 aa).

The tract at residues 35-56 is disordered; that stretch reads RGDRDGAGGPPGGADPDGDLDG.

It belongs to the glutamate--cysteine ligase type 2 family. YbdK subfamily.

The enzyme catalyses L-cysteine + L-glutamate + ATP = gamma-L-glutamyl-L-cysteine + ADP + phosphate + H(+). In terms of biological role, ATP-dependent carboxylate-amine ligase which exhibits weak glutamate--cysteine ligase activity. In Frankia alni (strain DSM 45986 / CECT 9034 / ACN14a), this protein is Putative glutamate--cysteine ligase 2-2.